The following is a 127-amino-acid chain: Mu-like prophage FluMu protein gp41 (127 aa).

Residues 107-127 are disordered; it reads VSRGRLDTADQETGKDLSAVS. Residues 110–121 show a composition bias toward basic and acidic residues; that stretch reads GRLDTADQETGK.

The protein to phage Mu protein gp41.

The polypeptide is Mu-like prophage FluMu protein gp41 (Haemophilus influenzae (strain ATCC 51907 / DSM 11121 / KW20 / Rd)).